Reading from the N-terminus, the 190-residue chain is Pancreatic IgW, short secretory form (190 aa).

One can recognise an Ig-like C1-type domain in the interval 53–145 (PNITALVPSV…PPSNFRSMIS (93 aa)). N-linked (GlcNAc...) asparagine glycosylation is present at Asn-54. A disulfide bridge links Cys-74 with Cys-131. The N-linked (GlcNAc...) asparagine glycan is linked to Asn-179.

As to expression, expressed in pancreas, spleen, epigonal organ and at low levels in several other tissues.

The protein resides in the secreted. In Ginglymostoma cirratum (Nurse shark), this protein is Pancreatic IgW, short secretory form.